The sequence spans 348 residues: N-formyl peptide receptor 2 (348 aa).

Asparagine 1 is a glycosylation site (N-linked (GlcNAc...) asparagine). The Extracellular portion of the chain corresponds to 1-24 (NFSTPLNEHEEVSYESAGYTVLRI). The helical transmembrane segment at 25–47 (LPLVVLGVTFVLGVLGNGLVIWV) threads the bilayer. At 48-58 (AGFRMTRTVTT) the chain is on the cytoplasmic side. The helical transmembrane segment at 59–80 (ICYLNLALADFSFTATLPFLIV) threads the bilayer. Topologically, residues 81–97 (SMAMGEKWPFGWFLCKL) are extracellular. The cysteines at positions 95 and 173 are disulfide-linked. Residues 98-118 (IHIVVDINLFGSVFLIGFIAL) form a helical membrane-spanning segment. The Cytoplasmic segment spans residues 119–137 (DRCICVLHPVWAQNHRTVS). The chain crosses the membrane as a helical span at residues 138–159 (LAMKVIVGPWILALVLTLPVFL). At 160–202 (FLTTVTIPNGDTYCTFNFASWGGTPEERQKVAITMLTARGIIR) the chain is on the extracellular side. The helical transmembrane segment at 203-223 (FVIGFSLPMSIVAICYGLIAA) threads the bilayer. Residues 224-239 (KIHKKGMIKSSRPLRV) lie on the Cytoplasmic side of the membrane. The helical transmembrane segment at 240–263 (LTAVVASFFICWFPFQLVALLGTV) threads the bilayer. The Extracellular segment spans residues 264-283 (WLKEMLFYGKYKIIDILVNP). Residues 284 to 303 (TSSLAFFNSCLNPMLYVFVG) traverse the membrane as a helical segment. The Cytoplasmic portion of the chain corresponds to 304 to 348 (QDFRERLIHSLPTSLERALSEDSAPTNDTAASCASPPAETELQAM). Residues 323 to 348 (SEDSAPTNDTAASCASPPAETELQAM) form a disordered region. A compositionally biased stretch (polar residues) spans 326-335 (SAPTNDTAAS).

It belongs to the G-protein coupled receptor 1 family. In terms of assembly, interacts with APP; the interaction takes place at the cell surface and the complex is then rapidly internalized.

The protein resides in the cell membrane. In terms of biological role, low affinity receptor for N-formyl-methionyl peptides, which are powerful neutrophil chemotactic factors. Binding of FMLP to the receptor causes activation of neutrophils. This response is mediated via a G-protein that activates a phosphatidylinositol-calcium second messenger system. Receptor for the chemokine-like protein FAM19A5, mediating FAM19A5-stimulated macrophage chemotaxis and the inhibitory effect on TNFSF11/RANKL-induced osteoclast differentiation. In Gorilla gorilla gorilla (Western lowland gorilla), this protein is N-formyl peptide receptor 2 (FPR2).